The primary structure comprises 210 residues: TM2 domain-containing protein C02F5.13 (210 aa).

Positions 1-18 (MRRLPWLIPFFLVNISNG) are cleaved as a signal peptide. The Extracellular portion of the chain corresponds to 19–138 (NNEFRIEFEY…PRTFTKSTPC (120 aa)). Asn-91 carries an N-linked (GlcNAc...) asparagine glycan. The helical transmembrane segment at 139-159 (IIYNGHYFLTTLLYSIFLGVV) threads the bilayer. The region spanning 143 to 191 (GHYFLTTLLYSIFLGVVAVDRFCLGYSAMAVGKLMTLGGFGIWWIVDIF) is the TM2 domain. Topologically, residues 160-178 (AVDRFCLGYSAMAVGKLMT) are cytoplasmic. Residues 179–199 (LGGFGIWWIVDIFLLVLGVLG) traverse the membrane as a helical segment. The Extracellular segment spans residues 200-210 (PADDSSWEPYY).

The protein belongs to the TM2 family.

Its subcellular location is the membrane. The chain is TM2 domain-containing protein C02F5.13 from Caenorhabditis elegans.